A 910-amino-acid chain; its full sequence is DNA mismatch repair protein MutS (910 aa).

Residues 1–11 are compositionally biased toward basic and acidic residues; it reads MEAKVEEKEPE. Positions 1–21 are disordered; sequence MEAKVEEKEPEPVENAGPDAP. Residue 658–665 participates in ATP binding; that stretch reads GPNMGGKS.

Belongs to the DNA mismatch repair MutS family.

This protein is involved in the repair of mismatches in DNA. It is possible that it carries out the mismatch recognition step. This protein has a weak ATPase activity. This is DNA mismatch repair protein MutS from Brucella melitensis biotype 1 (strain ATCC 23456 / CCUG 17765 / NCTC 10094 / 16M).